A 414-amino-acid chain; its full sequence is tRNA dimethylallyltransferase (414 aa).

33–40 is an ATP binding site; sequence APTASGKT. Residue 35–40 participates in substrate binding; it reads TASGKT. Interaction with substrate tRNA regions lie at residues 58–61, 182–186, and 266–271; these read DSAL, QRITR, and RCVGYR.

The protein belongs to the IPP transferase family. In terms of assembly, monomer. It depends on Mg(2+) as a cofactor.

The catalysed reaction is adenosine(37) in tRNA + dimethylallyl diphosphate = N(6)-dimethylallyladenosine(37) in tRNA + diphosphate. In terms of biological role, catalyzes the transfer of a dimethylallyl group onto the adenine at position 37 in tRNAs that read codons beginning with uridine, leading to the formation of N6-(dimethylallyl)adenosine (i(6)A). This Psychrobacter arcticus (strain DSM 17307 / VKM B-2377 / 273-4) protein is tRNA dimethylallyltransferase.